Here is a 214-residue protein sequence, read N- to C-terminus: Urease accessory protein UreE (214 aa).

Residues 163 to 214 (NAEPSGVDHSHEATDSGHGYGEDHDHDHSHDHNHDHDHNHDHDHSHSHDSHE) are disordered. Basic and acidic residues predominate over residues 168 to 214 (GVDHSHEATDSGHGYGEDHDHDHSHDHNHDHDHNHDHDHSHSHDSHE).

This sequence belongs to the UreE family.

It is found in the cytoplasm. Involved in urease metallocenter assembly. Binds nickel. Probably functions as a nickel donor during metallocenter assembly. In Natronomonas pharaonis (strain ATCC 35678 / DSM 2160 / CIP 103997 / JCM 8858 / NBRC 14720 / NCIMB 2260 / Gabara) (Halobacterium pharaonis), this protein is Urease accessory protein UreE.